We begin with the raw amino-acid sequence, 122 residues long: Large ribosomal subunit protein uL22 (122 aa).

Belongs to the universal ribosomal protein uL22 family. As to quaternary structure, part of the 50S ribosomal subunit.

This protein binds specifically to 23S rRNA; its binding is stimulated by other ribosomal proteins, e.g. L4, L17, and L20. It is important during the early stages of 50S assembly. It makes multiple contacts with different domains of the 23S rRNA in the assembled 50S subunit and ribosome. Its function is as follows. The globular domain of the protein is located near the polypeptide exit tunnel on the outside of the subunit, while an extended beta-hairpin is found that lines the wall of the exit tunnel in the center of the 70S ribosome. The sequence is that of Large ribosomal subunit protein uL22 from Caldicellulosiruptor saccharolyticus (strain ATCC 43494 / DSM 8903 / Tp8T 6331).